Consider the following 423-residue polypeptide: Tyrosine--tRNA ligase (423 aa).

Tyr-35 lines the L-tyrosine pocket. A 'HIGH' region motif is present at residues 40-49 (PTAPSLHAGH). L-tyrosine is bound by residues Tyr-170 and Gln-174. Residues 230–234 (KFGKS) carry the 'KMSKS' region motif. An ATP-binding site is contributed by Lys-233. Residues 355–412 (DLITDLLVATGLSASKGAARRTIAEGGVSVNNMKIDSDEWTPQASDFLHGRWLVLRRG) enclose the S4 RNA-binding domain.

This sequence belongs to the class-I aminoacyl-tRNA synthetase family. TyrS type 1 subfamily. As to quaternary structure, homodimer.

It localises to the cytoplasm. It catalyses the reaction tRNA(Tyr) + L-tyrosine + ATP = L-tyrosyl-tRNA(Tyr) + AMP + diphosphate + H(+). Catalyzes the attachment of tyrosine to tRNA(Tyr) in a two-step reaction: tyrosine is first activated by ATP to form Tyr-AMP and then transferred to the acceptor end of tRNA(Tyr). This chain is Tyrosine--tRNA ligase, found in Mycobacterium sp. (strain KMS).